Reading from the N-terminus, the 306-residue chain is MELKQEMASLLKTSPNAVKKRLLHQIGLSLYNTSHGFHEEEVKKKLEQFPGGSIDLQKENSGIGILTLNNPSKMNAFSGVMMLQLLEKVIELENWTEGKGLIIRGAKNTFSSGSDLNAVKALGTPEDGMAVCMFMQNTLTRFMRLPLISVALVQGRALGGGAEVTTACDFRLMTTESEIRFVHKEMGIIPSWGGATRLVEIIGGRQALKVLSGALKLDSEKALNIGMVDDILPSSDETECLKEAQEWLQQFIKGPPEVIRALKKSVSSCKELCLEEALQRERDILGTVWGGPANLEAVARKGKFNK.

K216 is modified (N6-acetyllysine; alternate). K216 carries the N6-succinyllysine; alternate modification.

Belongs to the enoyl-CoA hydratase/isomerase family.

The protein resides in the cytoplasm. Its subcellular location is the cytosol. The catalysed reaction is (2S)-ethylmalonyl-CoA + H(+) = butanoyl-CoA + CO2. It catalyses the reaction (S)-methylmalonyl-CoA + H(+) = propanoyl-CoA + CO2. The enzyme catalyses (2R)-ethylmalonyl-CoA + H(+) = butanoyl-CoA + CO2. Functionally, decarboxylates ethylmalonyl-CoA, a potentially toxic metabolite, to form butyryl-CoA, suggesting it might be involved in metabolite proofreading. Acts preferentially on (S)-ethylmalonyl-CoA but also has some activity on the (R)-isomer. Also has methylmalonyl-CoA decarboxylase activity at lower level. In Bos taurus (Bovine), this protein is Ethylmalonyl-CoA decarboxylase (ECHDC1).